Reading from the N-terminus, the 62-residue chain is MAAVCDICGKGPGFGMAVSHSHRRTHRRWNPNIQRVRALIGRGTYKRINVCTSCLKAGKVTR.

Belongs to the bacterial ribosomal protein bL28 family.

This is Large ribosomal subunit protein bL28 from Acidothermus cellulolyticus (strain ATCC 43068 / DSM 8971 / 11B).